Here is a 230-residue protein sequence, read N- to C-terminus: Cytidylate kinase (230 aa).

An ATP-binding site is contributed by 16 to 24 (GPASAGKST).

This sequence belongs to the cytidylate kinase family. Type 1 subfamily.

It is found in the cytoplasm. It catalyses the reaction CMP + ATP = CDP + ADP. The catalysed reaction is dCMP + ATP = dCDP + ADP. In Lactobacillus gasseri (strain ATCC 33323 / DSM 20243 / BCRC 14619 / CIP 102991 / JCM 1131 / KCTC 3163 / NCIMB 11718 / NCTC 13722 / AM63), this protein is Cytidylate kinase.